Here is a 1100-residue protein sequence, read N- to C-terminus: Regulator of nonsense transcripts 1 (1100 aa).

Low complexity predominate over residues serine 42–glutamine 53. A disordered region spans residues serine 42–asparagine 67. The Upf1 CH-rich domain occupies threonine 94 to asparagine 251. Zn(2+)-binding residues include cysteine 102, cysteine 105, cysteine 116, serine 119, cysteine 124, histidine 134, histidine 138, cysteine 144, cysteine 162, cysteine 165, cysteine 188, and cysteine 192. Residues cysteine 102 to histidine 134 are C3H. Positions cysteine 116–cysteine 144 are CC/SHH/C. Positions cysteine 162–cysteine 192 are C4. ATP-binding positions include glutamine 455, glycine 475–threonine 479, glutamine 645, tyrosine 682, and glutamate 813. Residues leucine 978–leucine 1065 form a disordered region. Over residues asparagine 982–glycine 993 the composition is skewed to low complexity. A compositionally biased stretch (polar residues) spans serine 1012–serine 1063.

It belongs to the DNA2/NAM7 helicase family.

The protein localises to the cytoplasm. It localises to the P-body. Its subcellular location is the nucleus. It is found in the perinuclear region. In terms of biological role, RNA-dependent helicase and ATPase required for nonsense-mediated decay (NMD) of mRNAs containing premature stop codons. Is recruited to mRNAs upon translation termination and undergoes a cycle of phosphorylation and dephosphorylation; its phosphorylation appears to be a key step in NMD. The formation of an upf1-upf2-upf3 surveillance complex is believed to activate NMD. The sequence is that of Regulator of nonsense transcripts 1 from Danio rerio (Zebrafish).